We begin with the raw amino-acid sequence, 258 residues long: Type III pantothenate kinase (258 aa).

Residue 6-13 (DVGNSDTV) coordinates ATP. Substrate is bound at residue 108 to 111 (GSDR). D110 serves as the catalytic Proton acceptor. Residue D130 coordinates K(+). An ATP-binding site is contributed by T133. T185 lines the substrate pocket.

It belongs to the type III pantothenate kinase family. In terms of assembly, homodimer. The cofactor is NH4(+). It depends on K(+) as a cofactor.

The protein localises to the cytoplasm. It carries out the reaction (R)-pantothenate + ATP = (R)-4'-phosphopantothenate + ADP + H(+). Its pathway is cofactor biosynthesis; coenzyme A biosynthesis; CoA from (R)-pantothenate: step 1/5. Functionally, catalyzes the phosphorylation of pantothenate (Pan), the first step in CoA biosynthesis. The chain is Type III pantothenate kinase from Thermobifida fusca (strain YX).